The following is a 183-amino-acid chain: Transposon gamma-delta resolvase (183 aa).

One can recognise a Resolvase/invertase-type recombinase catalytic domain in the interval 2-137; that stretch reads RLFGYARVST…EGRQEAMAKG (136 aa). Serine 10 functions as the O-(5'-phospho-DNA)-serine intermediate in the catalytic mechanism. The H-T-H motif DNA-binding region spans 161-180; the sequence is ASHISKTMNIARSTVYKVIN.

This sequence belongs to the site-specific recombinase resolvase family.

Functionally, this protein catalyzes the site-specific recombination of the transposon and also regulates its frequency of transposition. The sequence is that of Transposon gamma-delta resolvase (tnpR) from Escherichia coli (strain K12).